Here is a 97-residue protein sequence, read N- to C-terminus: Large ribosomal subunit protein bL27 (97 aa).

Residues 1 to 12 constitute a propeptide that is removed on maturation; the sequence is MIKLNLSNLQHF. The segment at 13–38 is disordered; sequence AHKKGGGSTSNGRDSQAKRLGAKAAD.

It belongs to the bacterial ribosomal protein bL27 family. Post-translationally, the N-terminus is cleaved by ribosomal processing cysteine protease Prp.

The protein is Large ribosomal subunit protein bL27 of Streptococcus equi subsp. equi (strain 4047).